Reading from the N-terminus, the 299-residue chain is Homoserine O-acetyltransferase (299 aa).

The active-site Acyl-thioester intermediate is the Cys142. Positions 163 and 192 each coordinate substrate. His235 (proton acceptor) is an active-site residue. The active site involves Glu237. Arg249 is a substrate binding site.

The protein belongs to the MetA family.

The protein resides in the cytoplasm. The catalysed reaction is L-homoserine + acetyl-CoA = O-acetyl-L-homoserine + CoA. The protein operates within amino-acid biosynthesis; L-methionine biosynthesis via de novo pathway; O-acetyl-L-homoserine from L-homoserine: step 1/1. In terms of biological role, transfers an acetyl group from acetyl-CoA to L-homoserine, forming acetyl-L-homoserine. The chain is Homoserine O-acetyltransferase from Synechococcus sp. (strain ATCC 27144 / PCC 6301 / SAUG 1402/1) (Anacystis nidulans).